Reading from the N-terminus, the 559-residue chain is Glutamine--tRNA ligase (559 aa).

The 'HIGH' region signature appears at 44-54; the sequence is PEPNGYLHIGH. Residues 45–47 and 51–57 each bind ATP; these read EPN and HIGHAKS. Asp-77 and Tyr-222 together coordinate L-glutamine. ATP is bound by residues Thr-241 and 272–273; that span reads RL. The 'KMSKS' region signature appears at 279–283; the sequence is LTSKR.

It belongs to the class-I aminoacyl-tRNA synthetase family. Monomer.

Its subcellular location is the cytoplasm. The catalysed reaction is tRNA(Gln) + L-glutamine + ATP = L-glutaminyl-tRNA(Gln) + AMP + diphosphate. In Pasteurella multocida (strain Pm70), this protein is Glutamine--tRNA ligase.